The chain runs to 554 residues: Sesquithujene synthase A (554 aa).

Asp308 and Asp312 together coordinate Mg(2+). 2 residues coordinate substrate: Asp308 and Asp312. The DDXXD motif motif lies at 308–312; sequence DDMFD. The interval 407–411 is determine the stereoselectivity of the enzyme; the sequence is SIGAN. Substrate contacts are provided by Arg449 and Asn452. Asn452, Ser456, and Glu460 together coordinate Mg(2+).

Belongs to the terpene synthase family. As to quaternary structure, monomer. Mg(2+) is required as a cofactor. Mn(2+) serves as cofactor. As to expression, highly expressed in the husk. Detected in leaves.

It localises to the cytoplasm. The enzyme catalyses (2E,6E)-farnesyl diphosphate = sesquithujene + diphosphate. It carries out the reaction (2Z,6Z)-farnesyl diphosphate = (1S,5S,6S)-alpha-bergamotene + diphosphate. The catalysed reaction is (2E,6E)-farnesyl diphosphate = (E)-beta-farnesene + diphosphate. It catalyses the reaction (2E,6E)-farnesyl diphosphate = (S)-beta-bisabolene + diphosphate. The enzyme catalyses (2Z,6E)-farnesyl diphosphate = (-)-beta-curcumene + diphosphate. It carries out the reaction (2E,6E)-farnesyl diphosphate = gamma-curcumene + diphosphate. The catalysed reaction is (2E,6E)-farnesyl diphosphate = sesquisabinene B + diphosphate. Its pathway is secondary metabolite biosynthesis; terpenoid biosynthesis. In terms of biological role, sesquiterpene synthase involved in the production after herbivore attack of a blend of volatiles that attracts natural enemies of herbivores. Converts farnesyl diphosphate to sesquithujene, (S)-beta-bisabolene, (Z)-alpha-bergamotene, sesquisabinene B and several minor products. Can also act in vitro as a monoterpene synthase, converting geranyl diphosphate to (S)-(-)-limonene, beta-myrcene and 11 other monoterpenes. The protein is Sesquithujene synthase A of Zea mays (Maize).